The primary structure comprises 211 residues: MNKPSIDQTPANQARARVYRLLSDLFAKEIDHQRLQSLQSAEAQAFFDLLAGEPRLAPEVNIIQEVLAELGDEASLLNLAADYCGLFLVGGKQSANPYAGLYLTPEGDEEQPQLFGPQHQEMLALLKQSKLGVQSDFPEPADHISVILAYVAQQATSLDDKAQQRFIAKYLDAWLAEFAKRVSDRDPGRFYQALARLTQIWVSLDCEALGA.

Belongs to the TorD/DmsD family. TorD subfamily.

It is found in the cytoplasm. Its function is as follows. Involved in the biogenesis of TorA. Acts on TorA before the insertion of the molybdenum cofactor and, as a result, probably favors a conformation of the apoenzyme that is competent for acquiring the cofactor. The sequence is that of Chaperone protein TorD from Shewanella loihica (strain ATCC BAA-1088 / PV-4).